We begin with the raw amino-acid sequence, 465 residues long: tRNA (guanine(37)-N(1))-methyltransferase (465 aa).

The transit peptide at 1 to 20 directs the protein to the mitochondrion; sequence MDKNSQLRDMNLFRAPAARA. S-adenosyl-L-methionine is bound by residues His238 and 304–305; that span reads DG. Residues 326–345 are disordered; it reads AVIKPPRPPRKSAAPPPEPV. Residue Asn359 participates in S-adenosyl-L-methionine binding.

Belongs to the class I-like SAM-binding methyltransferase superfamily. TRM5/TYW2 family. In terms of assembly, monomer.

The protein resides in the mitochondrion matrix. Its subcellular location is the nucleus. It localises to the cytoplasm. The enzyme catalyses guanosine(37) in tRNA + S-adenosyl-L-methionine = N(1)-methylguanosine(37) in tRNA + S-adenosyl-L-homocysteine + H(+). In terms of biological role, specifically methylates the N1 position of guanosine-37 in various cytoplasmic and mitochondrial tRNAs. Methylation is not dependent on the nature of the nucleoside 5' of the target nucleoside. This is the first step in the biosynthesis of wybutosine (yW), a modified base adjacent to the anticodon of tRNAs and required for accurate decoding. In Fusarium vanettenii (strain ATCC MYA-4622 / CBS 123669 / FGSC 9596 / NRRL 45880 / 77-13-4) (Fusarium solani subsp. pisi), this protein is tRNA (guanine(37)-N(1))-methyltransferase.